The sequence spans 108 residues: MTLGQQAESLAQGYLEQQGLTFVARNVRYPFGEIDLVMRHKHHWVFVEVKYRSANQFGGAIQALSKAQIGRIRMAASHYLQTHKLDVPCRFDVVAIEDAQIHWLVDAF.

It belongs to the UPF0102 family.

The sequence is that of UPF0102 protein Shewana3_3881 from Shewanella sp. (strain ANA-3).